The sequence spans 596 residues: Aspartate--tRNA(Asp/Asn) ligase (596 aa).

L-aspartate is bound at residue Glu-172. The segment at Gln-196–Lys-199 is aspartate. Arg-218 contacts L-aspartate. ATP contacts are provided by residues Arg-218–Glu-220 and Gln-227. His-455 is an L-aspartate binding site. ATP is bound at residue Glu-489. Arg-496 is an L-aspartate binding site. Residue Gly-541 to Arg-544 participates in ATP binding.

It belongs to the class-II aminoacyl-tRNA synthetase family. Type 1 subfamily. As to quaternary structure, homodimer.

It is found in the cytoplasm. It catalyses the reaction tRNA(Asx) + L-aspartate + ATP = L-aspartyl-tRNA(Asx) + AMP + diphosphate. Its function is as follows. Aspartyl-tRNA synthetase with relaxed tRNA specificity since it is able to aspartylate not only its cognate tRNA(Asp) but also tRNA(Asn). Reaction proceeds in two steps: L-aspartate is first activated by ATP to form Asp-AMP and then transferred to the acceptor end of tRNA(Asp/Asn). The protein is Aspartate--tRNA(Asp/Asn) ligase of Bordetella bronchiseptica (strain ATCC BAA-588 / NCTC 13252 / RB50) (Alcaligenes bronchisepticus).